A 338-amino-acid chain; its full sequence is MIHKNWAELIKPTQLEVKPGNDPARQATVIAEPLERGFGLTLGNALRRILMSSLQGAAISSVQIDNVLHEFSSVAGVREDVTDIILNLKQVSLRMDVEGPKRLSVNAKGPAVVTAGDISESAGIEVLNRDHVICHLDDGADLFMELTVNTGKGYVSADKNRPEDAPIGLIPIDAIYSPVKKVAYDVQPTREGQVLDYDKLTMKIETDGSITPDDAVAFAARILQDQLSIFVNFDEPESAGRQDDDDGLEFNPLLLKKVDELELSVRSANCLKNDNIVYIGDLIQKTEAEMLRTPNFGRKSLNEIKEVLSGMGLHLGMDVEDWPPDNIEDLAKKFEDAF.

An alpha N-terminal domain (alpha-NTD) region spans residues 1 to 234 (MIHKNWAELI…DQLSIFVNFD (234 aa)). Residues 250–338 (FNPLLLKKVD…DLAKKFEDAF (89 aa)) form an alpha C-terminal domain (alpha-CTD) region.

Belongs to the RNA polymerase alpha chain family. Homodimer. The RNAP catalytic core consists of 2 alpha, 1 beta, 1 beta' and 1 omega subunit. When a sigma factor is associated with the core the holoenzyme is formed, which can initiate transcription.

It catalyses the reaction RNA(n) + a ribonucleoside 5'-triphosphate = RNA(n+1) + diphosphate. DNA-dependent RNA polymerase catalyzes the transcription of DNA into RNA using the four ribonucleoside triphosphates as substrates. This is DNA-directed RNA polymerase subunit alpha from Ruegeria pomeroyi (strain ATCC 700808 / DSM 15171 / DSS-3) (Silicibacter pomeroyi).